Reading from the N-terminus, the 226-residue chain is Biosynthetic peptidoglycan transglycosylase (226 aa).

The helical transmembrane segment at I5–L25 threads the bilayer.

This sequence belongs to the glycosyltransferase 51 family.

It localises to the cell inner membrane. The enzyme catalyses [GlcNAc-(1-&gt;4)-Mur2Ac(oyl-L-Ala-gamma-D-Glu-L-Lys-D-Ala-D-Ala)](n)-di-trans,octa-cis-undecaprenyl diphosphate + beta-D-GlcNAc-(1-&gt;4)-Mur2Ac(oyl-L-Ala-gamma-D-Glu-L-Lys-D-Ala-D-Ala)-di-trans,octa-cis-undecaprenyl diphosphate = [GlcNAc-(1-&gt;4)-Mur2Ac(oyl-L-Ala-gamma-D-Glu-L-Lys-D-Ala-D-Ala)](n+1)-di-trans,octa-cis-undecaprenyl diphosphate + di-trans,octa-cis-undecaprenyl diphosphate + H(+). It functions in the pathway cell wall biogenesis; peptidoglycan biosynthesis. Functionally, peptidoglycan polymerase that catalyzes glycan chain elongation from lipid-linked precursors. The chain is Biosynthetic peptidoglycan transglycosylase from Nitrobacter hamburgensis (strain DSM 10229 / NCIMB 13809 / X14).